The primary structure comprises 79 residues: Acyl carrier protein (79 aa).

One can recognise a Carrier domain in the interval 2–79; that stretch reads ASKEEILAGL…QDAVDFIXGA (78 aa). At serine 40 the chain carries O-(pantetheine 4'-phosphoryl)serine.

The protein belongs to the acyl carrier protein (ACP) family. Post-translationally, 4'-phosphopantetheine is transferred from CoA to a specific serine of apo-ACP by AcpS. This modification is essential for activity because fatty acids are bound in thioester linkage to the sulfhydryl of the prosthetic group.

The protein localises to the cytoplasm. The protein operates within lipid metabolism; fatty acid biosynthesis. Carrier of the growing fatty acid chain in fatty acid biosynthesis. This chain is Acyl carrier protein, found in Myxococcus xanthus.